The sequence spans 385 residues: Rubredoxin-NAD(+) reductase (385 aa).

Residues 8-11, 32-33, isoleucine 79, glutamate 156, aspartate 275, and isoleucine 293 contribute to the FAD site; these read AGTA and SR.

This sequence belongs to the FAD-dependent oxidoreductase family. Homodimer. Requires FAD as cofactor.

The protein resides in the cytoplasm. The catalysed reaction is 2 reduced [rubredoxin] + NAD(+) + H(+) = 2 oxidized [rubredoxin] + NADH. Its pathway is hydrocarbon metabolism; alkane degradation. Its function is as follows. Involved in the hydrocarbon hydroxylating system, which transfers electrons from NADH to rubredoxin reductase and then through rubredoxin to alkane 1 monooxygenase. The chain is Rubredoxin-NAD(+) reductase (alkT) from Pseudomonas putida (Arthrobacter siderocapsulatus).